We begin with the raw amino-acid sequence, 276 residues long: Rhomboid protease GlpG (276 aa).

6 helical membrane-spanning segments follow: residues 94–114 (GPVT…MSLI), 142–162 (IFMH…WYLG), 169–189 (LGSG…GYVQ), 192–212 (FSGP…GYVW), 229–249 (LIIF…GMSM), and 250–270 (ANGA…VDTL). S201 serves as the catalytic Nucleophile. Residue H254 is part of the active site.

Belongs to the peptidase S54 family.

The protein resides in the cell inner membrane. It carries out the reaction Cleaves type-1 transmembrane domains using a catalytic dyad composed of serine and histidine that are contributed by different transmembrane domains.. Functionally, rhomboid-type serine protease that catalyzes intramembrane proteolysis. This Salmonella dublin (strain CT_02021853) protein is Rhomboid protease GlpG.